Reading from the N-terminus, the 67-residue chain is Large ribosomal subunit protein uL29 (67 aa).

This sequence belongs to the universal ribosomal protein uL29 family.

The polypeptide is Large ribosomal subunit protein uL29 (Exiguobacterium sp. (strain ATCC BAA-1283 / AT1b)).